The sequence spans 218 residues: GTP cyclohydrolase 1 (218 aa).

Residues Cys109, His112, and Cys180 each coordinate Zn(2+).

Belongs to the GTP cyclohydrolase I family. Toroid-shaped homodecamer, composed of two pentamers of five dimers.

The catalysed reaction is GTP + H2O = 7,8-dihydroneopterin 3'-triphosphate + formate + H(+). The protein operates within cofactor biosynthesis; 7,8-dihydroneopterin triphosphate biosynthesis; 7,8-dihydroneopterin triphosphate from GTP: step 1/1. In Pasteurella multocida (strain Pm70), this protein is GTP cyclohydrolase 1 (folE).